Consider the following 160-residue polypeptide: Eukaryotic translation initiation factor 5A-1/2 (160 aa).

A compositionally biased stretch (basic and acidic residues) spans 1–12 (MSDEEHHFESKA). Positions 1-21 (MSDEEHHFESKADAGASKTYP) are disordered. Lys-52 carries the hypusine modification.

The protein belongs to the eIF-5A family. Post-translationally, lys-52 undergoes hypusination, a unique post-translational modification that consists in the addition of a butylamino group from spermidine to lysine side chain, leading to the formation of the unusual amino acid hypusine. eIF-5As are the only known proteins to undergo this modification, which is essential for their function.

Translation factor that promotes translation elongation and termination, particularly upon ribosome stalling at specific amino acid sequence contexts. Binds between the exit (E) and peptidyl (P) site of the ribosome and promotes rescue of stalled ribosome: specifically required for efficient translation of polyproline-containing peptides as well as other motifs that stall the ribosome. Acts as a ribosome quality control (RQC) cofactor by joining the RQC complex to facilitate peptidyl transfer during CAT tailing step. This is Eukaryotic translation initiation factor 5A-1/2 (EIF5A1) from Solanum tuberosum (Potato).